The chain runs to 398 residues: Acetate kinase 1 (398 aa).

Asn9 contacts Mg(2+). An ATP-binding site is contributed by Lys16. Position 89 (Arg89) interacts with substrate. Asp146 acts as the Proton donor/acceptor in catalysis. ATP contacts are provided by residues 206 to 210 (HLGNG), 281 to 283 (DCR), and 329 to 333 (GIGEN). Mg(2+) is bound at residue Glu384.

Belongs to the acetokinase family. As to quaternary structure, homodimer. Requires Mg(2+) as cofactor. Mn(2+) serves as cofactor.

The protein localises to the cytoplasm. It carries out the reaction acetate + ATP = acetyl phosphate + ADP. It participates in metabolic intermediate biosynthesis; acetyl-CoA biosynthesis; acetyl-CoA from acetate: step 1/2. Catalyzes the formation of acetyl phosphate from acetate and ATP. Can also catalyze the reverse reaction. In Photobacterium profundum (strain SS9), this protein is Acetate kinase 1.